The following is a 226-amino-acid chain: Probable functional amyloid protease FapD (226 aa).

Positions 1–18 (MRRATLCLLLLLAGPSWA) are cleaved as a signal peptide. The 131-residue stretch at 50–180 (QKTDFSCGAA…AGWNGIVFAV (131 aa)) folds into the Peptidase C39 domain. Cys-56 is an active-site residue.

Belongs to the FapD family.

The protein resides in the periplasm. Its function is as follows. Probable cysteine protease that is involved in processing fibril precursors. Upon overexpression of the endogenous six-gene locus (fapA-fapF) in situ, cells form large clumps during liquid growth, make large amounts of biofilm and produce amyloid fibrils. Expression of the 6 gene operon in E.coli strain BL21(DE3) induces flocculation and biofilm formation with copious extracellular fibrils. The chain is Probable functional amyloid protease FapD from Pseudomonas fluorescens.